A 143-amino-acid chain; its full sequence is Actin-depolymerizing factor (143 aa).

In terms of domain architecture, ADF-H spans 11–143 (GMGVADHSKN…DLEVLRERAH (133 aa)).

This sequence belongs to the actin-binding proteins ADF family.

Functionally, actin-depolymerizing protein. Severs actin filaments (F-actin) and binds to actin monomers. The polypeptide is Actin-depolymerizing factor (Vitis vinifera (Grape)).